We begin with the raw amino-acid sequence, 155 residues long: Leader peptidase HopD (155 aa).

The protein belongs to the peptidase A24 family.

In Escherichia coli, this protein is Leader peptidase HopD (hopD).